A 469-amino-acid polypeptide reads, in one-letter code: Acetyl-CoA decarbonylase/synthase complex subunit beta 2 (469 aa).

[Ni-Fe-S] cluster is bound by residues Cys-187, Cys-190, Cys-276, and Cys-278.

It belongs to the CdhC family. In terms of assembly, monomer. The ACDS complex is made up of alpha, epsilon, beta, gamma and delta chains with a probable stoichiometry of (alpha(2)epsilon(2))(4)-beta(8)-(gamma(1)delta(1))(8) (Potential). The cofactor is [Ni-Fe-S] cluster.

It carries out the reaction Co(I)-[corrinoid Fe-S protein] + acetyl-CoA + H(+) = methyl-Co(III)-[corrinoid Fe-S protein] + CO + CoA. Functionally, part of a complex that catalyzes the reversible cleavage of acetyl-CoA, allowing autotrophic growth from CO(2). The alpha-epsilon complex generates CO from CO(2), while the beta subunit (this protein) combines the CO with CoA and a methyl group to form acetyl-CoA. The methyl group, which is incorporated into acetyl-CoA, is transferred to the beta subunit by a corrinoid iron-sulfur protein (the gamma-delta complex). The chain is Acetyl-CoA decarbonylase/synthase complex subunit beta 2 (cdhC2) from Methanocaldococcus jannaschii (strain ATCC 43067 / DSM 2661 / JAL-1 / JCM 10045 / NBRC 100440) (Methanococcus jannaschii).